Reading from the N-terminus, the 691-residue chain is Elongation factor G (691 aa).

In terms of domain architecture, tr-type G spans E8 to I282. GTP is bound by residues A17–T24, D81–H85, and N135–D138.

It belongs to the TRAFAC class translation factor GTPase superfamily. Classic translation factor GTPase family. EF-G/EF-2 subfamily.

Its subcellular location is the cytoplasm. In terms of biological role, catalyzes the GTP-dependent ribosomal translocation step during translation elongation. During this step, the ribosome changes from the pre-translocational (PRE) to the post-translocational (POST) state as the newly formed A-site-bound peptidyl-tRNA and P-site-bound deacylated tRNA move to the P and E sites, respectively. Catalyzes the coordinated movement of the two tRNA molecules, the mRNA and conformational changes in the ribosome. The protein is Elongation factor G of Prochlorococcus marinus (strain SARG / CCMP1375 / SS120).